Here is a 186-residue protein sequence, read N- to C-terminus: Ribosome-recycling factor (186 aa).

It belongs to the RRF family.

The protein resides in the cytoplasm. Responsible for the release of ribosomes from messenger RNA at the termination of protein biosynthesis. May increase the efficiency of translation by recycling ribosomes from one round of translation to another. This Paraburkholderia xenovorans (strain LB400) protein is Ribosome-recycling factor.